The primary structure comprises 1262 residues: Putative late blight resistance protein homolog R1B-23 (1262 aa).

Coiled coils occupy residues 364-384 and 475-496; these read DSLAFLKNQLQVIQTKFESMQ and RMNEEIVGFEDVIETLRKKLLN. An NB-ARC domain is found at 475-761; sequence RMNEEIVGFE…ISESFIKSCE (287 aa). Position 508–515 (508–515) interacts with ATP; sequence GMPGLGKT. LRR repeat units lie at residues 890-914, 933-961, 1036-1059, 1064-1083, 1084-1112, and 1133-1157; these read FKFLKVLDLEHQVVIDSIPTELFYL, LWNLETLILNRTSAATGKTLLLPSTVWDM, PIRLEMLKLHQSNIFKPISFCISA, YLELSGFYLDSQYLSETADH, LKHLEVLKLYYVEFGDHREWKVSNGMFPQ, and FPNLEQLVLRRCRHLMEIPSCFMDI. The HMA domain occupies 1181 to 1248; sequence ETQVEDNQNT…KLRNVAYADE (68 aa).

Belongs to the disease resistance NB-LRR family.

It localises to the cytoplasm. The protein localises to the membrane. In terms of biological role, confers resistance to late blight (Phytophthora infestans) races carrying the avirulence gene Avr1. Resistance proteins guard the plant against pathogens that contain an appropriate avirulence protein via an indirect interaction with this avirulence protein. That triggers a defense system including the hypersensitive response, which restricts the pathogen growth. In Solanum demissum (Wild potato), this protein is Putative late blight resistance protein homolog R1B-23 (R1B-23).